Reading from the N-terminus, the 176-residue chain is MKTKEIVDGVTMKRAITRMTYEIIERNKNLDNIVLAGIKTRGVFIARRIQERLKQIEGLDVPLGELDTKSFRDDVKVEENTTEMPVDITNRDVILVDDVLYTGRTIRAAIDNIVNLGRPARVSLAVLVDRGHRELPIRADYVGKNIPTSSSEEIVVNMVEIDDKDNVLLLAKEDSL.

The PRPP-binding motif lies at 93–105 (VILVDDVLYTGRT).

Belongs to the purine/pyrimidine phosphoribosyltransferase family. PyrR subfamily. As to quaternary structure, homodimer and homohexamer; in equilibrium.

The catalysed reaction is UMP + diphosphate = 5-phospho-alpha-D-ribose 1-diphosphate + uracil. Regulates transcriptional attenuation of the pyrimidine nucleotide (pyr) operon by binding in a uridine-dependent manner to specific sites on pyr mRNA. This disrupts an antiterminator hairpin in the RNA and favors formation of a downstream transcription terminator, leading to a reduced expression of downstream genes. Its function is as follows. Also displays a weak uracil phosphoribosyltransferase activity which is not physiologically significant. The chain is Bifunctional protein PyrR from Streptococcus mutans serotype c (strain ATCC 700610 / UA159).